Consider the following 44-residue polypeptide: Alpha-amylase inhibitor WDAI-3 (44 aa).

Cysteines 20 and 41 form a disulfide.

Belongs to the protease inhibitor I6 (cereal trypsin/alpha-amylase inhibitor) family. As to quaternary structure, homodimer. In terms of processing, the disulfide bonds are essential for the inhibitor activity. In terms of tissue distribution, endosperm.

The protein localises to the secreted. In terms of biological role, alpha-amylase inhibitor. In Triticum aestivum (Wheat), this protein is Alpha-amylase inhibitor WDAI-3 (IHA-B1-2).